A 105-amino-acid chain; its full sequence is Heat shock protein HspQ (105 aa).

This sequence belongs to the HspQ family.

The protein resides in the cytoplasm. In terms of biological role, involved in the degradation of certain denaturated proteins, including DnaA, during heat shock stress. The sequence is that of Heat shock protein HspQ from Klebsiella pneumoniae (strain 342).